Here is a 546-residue protein sequence, read N- to C-terminus: Sodium/hydrogen exchanger 2 (546 aa).

The Cytoplasmic segment spans residues 1–21 (MTMFASLTSKMLSVSTSDHAS). A helical transmembrane segment spans residues 22–42 (VVSLNLFVALLCACIVIGHLL). The Vacuolar portion of the chain corresponds to 43-47 (EENRW). A helical membrane pass occupies residues 48-68 (MNESITALLIGLGTGVVILLI). The Cytoplasmic segment spans residues 69-75 (SRGKNSH). The helical intramembrane region spans 76–96 (LLVFSEDLFFIYLLPPIIFNA). At 97–111 (GFQVKKKQFFRNFVT) the chain is on the cytoplasmic side. Residues 112–132 (IMAFGAIGTVVSCTIISLGAI) form a helical membrane-spanning segment. The Vacuolar segment spans residues 133–148 (QFFKKLDIGTFDLGDF). Intramembrane regions (helical) lie at residues 149 to 168 (LAIG…QVLN) and 174 to 194 (LLYS…VVLF). The Vacuolar segment spans residues 195 to 218 (NAIQSFDLTHLNHEAAFQFLGNFF). Residues 219–239 (YLFLLSTGLGVATGLISAYVI) traverse the membrane as a helical segment. Residues 240–264 (KKLYFGRHSTDREVALMMLMAYLSY) lie on the Cytoplasmic side of the membrane. The chain crosses the membrane as a helical span at residues 265-285 (MLAELFALSGILTVFFCGIVM). The Vacuolar portion of the chain corresponds to 286–304 (SHYTWHNVTESSRITTKHA). Asn-292 carries N-linked (GlcNAc...) asparagine glycosylation. Residues 305–325 (FATLSFLAETFIFLYVGMDAL) form a helical membrane-spanning segment. Topologically, residues 326 to 344 (DIEKWRFVSDSPGTSVAVS) are cytoplasmic. The chain crosses the membrane as a helical span at residues 345–365 (SILMGLVMLGRAAFVFPLSFL). Over 366-381 (SNLAKKHQSEKISIKQ) the chain is Vacuolar. A helical transmembrane segment spans residues 382-402 (QVVIWWAGLMRGAVSMALAYN). Residues 403 to 415 (KFTRSGHTELRGN) lie on the Cytoplasmic side of the membrane. A helical membrane pass occupies residues 416–436 (AIMITSTITVCLFSTMVFGML). Topologically, residues 437-546 (TKPLIRYLMP…ERSSHDLSKP (110 aa)) are vacuolar.

Belongs to the monovalent cation:proton antiporter 1 (CPA1) transporter (TC 2.A.36) family. In terms of tissue distribution, expressed in roots and shoots.

Its subcellular location is the vacuole membrane. It catalyses the reaction Na(+)(in) + H(+)(out) = Na(+)(out) + H(+)(in). The catalysed reaction is K(+)(in) + H(+)(out) = K(+)(out) + H(+)(in). Its function is as follows. Acts in low affinity electroneutral exchange of protons for cations such as Na(+) or K(+) across membranes. May also exchange Li(+) and Cs(+) with a lower affinity. Involved in vacuolar ion compartmentalization necessary for cell volume regulation and cytoplasmic Na(+) detoxification. In Arabidopsis thaliana (Mouse-ear cress), this protein is Sodium/hydrogen exchanger 2 (NHX2).